The chain runs to 359 residues: Membrane-bound lytic murein transglycosylase C (359 aa).

A signal peptide spans 1 to 16; that stretch reads MKKYLALALIAPLLIS. Cysteine 17 carries N-palmitoyl cysteine lipidation. Cysteine 17 is lipidated: S-diacylglycerol cysteine.

This sequence belongs to the transglycosylase Slt family.

The protein localises to the cell outer membrane. It carries out the reaction Exolytic cleavage of the (1-&gt;4)-beta-glycosidic linkage between N-acetylmuramic acid (MurNAc) and N-acetylglucosamine (GlcNAc) residues in peptidoglycan, from either the reducing or the non-reducing ends of the peptidoglycan chains, with concomitant formation of a 1,6-anhydrobond in the MurNAc residue.. Functionally, murein-degrading enzyme. May play a role in recycling of muropeptides during cell elongation and/or cell division. This Shigella dysenteriae serotype 1 (strain Sd197) protein is Membrane-bound lytic murein transglycosylase C.